Here is a 618-residue protein sequence, read N- to C-terminus: DNA mismatch repair protein MutL (618 aa).

It belongs to the DNA mismatch repair MutL/HexB family.

Its function is as follows. This protein is involved in the repair of mismatches in DNA. It is required for dam-dependent methyl-directed DNA mismatch repair. May act as a 'molecular matchmaker', a protein that promotes the formation of a stable complex between two or more DNA-binding proteins in an ATP-dependent manner without itself being part of a final effector complex. The polypeptide is DNA mismatch repair protein MutL (Porphyromonas gingivalis (strain ATCC BAA-308 / W83)).